A 170-amino-acid polypeptide reads, in one-letter code: Small ribosomal subunit protein uS5 (170 aa).

Residues 12-75 enclose the S5 DRBM domain; the sequence is WSELLVSVRR…NAAKKSMIRV (64 aa).

It belongs to the universal ribosomal protein uS5 family. As to quaternary structure, part of the 30S ribosomal subunit. Contacts proteins S4 and S8.

Its function is as follows. With S4 and S12 plays an important role in translational accuracy. In terms of biological role, located at the back of the 30S subunit body where it stabilizes the conformation of the head with respect to the body. In Wolbachia sp. subsp. Brugia malayi (strain TRS), this protein is Small ribosomal subunit protein uS5.